The primary structure comprises 357 residues: Acyl-coenzyme A:6-aminopenicillanic-acid-acyltransferase 40 kDa form (357 aa).

The 6-aminopenicillanate site is built by Asp121 and Arg310.

The protein belongs to the peptidase C45 family. In terms of assembly, the active form of the enzyme results from processing of the 40-kDa monomeric precursor to a heterodimer containing subunits of 11 and 29 kDa. In terms of processing, the pre-AAT protein is synthesized as 40 kDa precursor which is then self-processed into an 11 kDa (protein A) and a 29 kDa (protein B). The B protein carries AAT activity.

The protein localises to the peroxisome matrix. The enzyme catalyses isopenicillin N + phenylacetyl-CoA + H2O = penicillin G + L-2-aminoadipate + CoA + H(+). It functions in the pathway antibiotic biosynthesis; penicillin G biosynthesis; penicillin G from L-alpha-aminoadipate and L-cysteine and L-valine: step 3/3. Its function is as follows. Nonribosomal peptide synthetase; part of the gene cluster that mediates the biosynthesis of penicillin, the world's most important antibiotic. AatA catalyzes the exchange of the alpha-aminoadipyl side chain of isopenicillin N for phenylacetic acid to yield penicillin. This step occurs in the peroxisomal matrix and the penM and paaT transporters are involved in the isopenicillin N and phenylacetic acid import into the peroxisome, respectively. The penicillin biosynthesis occurs via 3 enzymatic steps, the first corresponding to the production of the tripeptide N-[(5S)-5-amino-5-carboxypentanoyl]-L-cysteinyl-D-valine (LLD-ACV or ACV) by the NRPS acvA. The tripeptide ACV is then cyclized to isopenicillin N (IPN) by the isopenicillin N synthase ipnA that forms the beta-lactam nucleus. Finally, the alpha-aminoadipyl side chain is exchanged for phenylacetic acid by the isopenicillin N acyltransferase penDE to yield penicillin in the peroxisomal matrix. This chain is Acyl-coenzyme A:6-aminopenicillanic-acid-acyltransferase 40 kDa form, found in Emericella nidulans (strain FGSC A4 / ATCC 38163 / CBS 112.46 / NRRL 194 / M139) (Aspergillus nidulans).